A 53-amino-acid chain; its full sequence is Large ribosomal subunit protein bL32c (53 aa).

The segment at 1-21 (MAVPKKRTSKSKKKSRRSHWI) is disordered.

It belongs to the bacterial ribosomal protein bL32 family.

The protein localises to the plastid. It is found in the chloroplast. This Cyanidium caldarium (Red alga) protein is Large ribosomal subunit protein bL32c (rpl32).